The following is a 251-amino-acid chain: Probable transcriptional regulatory protein SYNPCC7002_A0851 (251 aa).

The Response regulatory domain maps to 20–141; it reads RILVVEDEAV…ELVARCRALL (122 aa). Position 76 is a 4-aspartylphosphate (Asp76). A DNA-binding region (ompR/PhoB-type) is located at residues 153-251; sequence NSVRQFKDIS…TVRGFGYRFG (99 aa).

In terms of processing, phosphorylation.

This Picosynechococcus sp. (strain ATCC 27264 / PCC 7002 / PR-6) (Agmenellum quadruplicatum) protein is Probable transcriptional regulatory protein SYNPCC7002_A0851.